Here is a 267-residue protein sequence, read N- to C-terminus: Interleukin-2 receptor subunit alpha (267 aa).

A signal peptide spans 1-21; sequence MEPHLLMLGFLSFTIVPGCWA. Positions 22 to 79 constitute a Sushi 1 domain; that stretch reads ELCLYDPPEVPNATFKALSYKNGTILNCECKRGFRRLNELVYMACLGNSWSNNCQCTS. The Extracellular portion of the chain corresponds to 22-235; sequence ELCLYDPPEV…ETFVFTKEYQ (214 aa). 3 cysteine pairs are disulfide-bonded: Cys24-Cys66, Cys49-Cys75, and Cys51-Cys77. Residues Asn33 and Asn43 are each glycosylated (N-linked (GlcNAc...) asparagine). Over residues 82–93 the composition is skewed to polar residues; the sequence is HDNSREQVTPQP. Residues 82–108 are disordered; the sequence is HDNSREQVTPQPEGQKEQQTTDTQKST. Low complexity predominate over residues 98-108; that stretch reads EQQTTDTQKST. One can recognise a Sushi 2 domain in the interval 118–181; it reads GHCREPPPWR…WTHPQLTCVD (64 aa). 2 disulfide bridges follow: Cys120/Cys163 and Cys147/Cys179. The tract at residues 191–215 is disordered; sequence SEESQGSRNSFPESEASCPTPNTDF. Polar residues predominate over residues 192 to 215; it reads EESQGSRNSFPESEASCPTPNTDF. Residues 236 to 256 form a helical membrane-spanning segment; it reads VAVASCIFLLLSILLLSGFTW. Residues 257-267 lie on the Cytoplasmic side of the membrane; the sequence is QHRWRKSRRTI.

Non-covalent dimer of an alpha and a beta subunit. IL2R exists in 3 different forms: a high affinity dimer, an intermediate affinity monomer (beta subunit), and a low affinity monomer (alpha subunit). The high and intermediate affinity forms also associate with a gamma subunit.

Its subcellular location is the membrane. Its function is as follows. Receptor for interleukin-2. The receptor is involved in the regulation of immune tolerance by controlling regulatory T cells (TREGs) activity. TREGs suppress the activation and expansion of autoreactive T-cells. The polypeptide is Interleukin-2 receptor subunit alpha (Il2ra) (Rattus norvegicus (Rat)).